Consider the following 294-residue polypeptide: Putative lipid kinase SP_1045 (294 aa).

The 131-residue stretch at 1–131 folds into the DAGKc domain; it reads MKKAMVIINP…IDIGKANDNY (131 aa). ATP-binding positions include 9–13, Thr-40, 66–72, and Thr-93; these read NPTSG and GDGTVNE. Positions 212 and 214 each coordinate Mg(2+). Asp-269 acts as the Proton acceptor in catalysis.

This sequence belongs to the diacylglycerol/lipid kinase family. Mg(2+) is required as a cofactor.

In terms of biological role, may catalyze the ATP-dependent phosphorylation of lipids other than diacylglycerol (DAG). In fact, is not able to exhibit diacylglycerol kinase activity in vitro. The polypeptide is Putative lipid kinase SP_1045 (Streptococcus pneumoniae serotype 4 (strain ATCC BAA-334 / TIGR4)).